The chain runs to 263 residues: Small ribosomal subunit protein uS2 (263 aa).

The segment covering 230–249 (GEALVNEEKEITDEEKKEVL) has biased composition (basic and acidic residues). The segment at 230 to 263 (GEALVNEEKEITDEEKKEVLDEAMSEEDFGEEQE) is disordered. Acidic residues predominate over residues 250 to 263 (DEAMSEEDFGEEQE).

It belongs to the universal ribosomal protein uS2 family.

This chain is Small ribosomal subunit protein uS2, found in Campylobacter jejuni subsp. jejuni serotype O:2 (strain ATCC 700819 / NCTC 11168).